The chain runs to 488 residues: Putative sugar transporter ERD6-like 13 (488 aa).

A run of 12 helical transmembrane segments spans residues 51–71 (LILL…GTAA), 89–109 (LAEF…GAAM), 116–138 (VFGR…LMIA), 151–171 (LFLG…IVEI), 182–202 (AINS…GSVI), 207–227 (LALI…FIPE), 291–311 (VGIG…TFYL), 324–344 (VGVM…IVIV), 353–373 (LTVA…SFLF), 390–410 (GVLV…WVMI), 423–445 (GTLC…NFLF), and 451–471 (GVFF…MKMV).

The protein belongs to the major facilitator superfamily. Sugar transporter (TC 2.A.1.1) family.

It localises to the membrane. Its function is as follows. Sugar transporter. The protein is Putative sugar transporter ERD6-like 13 of Arabidopsis thaliana (Mouse-ear cress).